The sequence spans 102 residues: Aspartyl/glutamyl-tRNA(Asn/Gln) amidotransferase subunit C (102 aa).

Belongs to the GatC family. Heterotrimer of A, B and C subunits.

The enzyme catalyses L-glutamyl-tRNA(Gln) + L-glutamine + ATP + H2O = L-glutaminyl-tRNA(Gln) + L-glutamate + ADP + phosphate + H(+). It carries out the reaction L-aspartyl-tRNA(Asn) + L-glutamine + ATP + H2O = L-asparaginyl-tRNA(Asn) + L-glutamate + ADP + phosphate + 2 H(+). In terms of biological role, allows the formation of correctly charged Asn-tRNA(Asn) or Gln-tRNA(Gln) through the transamidation of misacylated Asp-tRNA(Asn) or Glu-tRNA(Gln) in organisms which lack either or both of asparaginyl-tRNA or glutaminyl-tRNA synthetases. The reaction takes place in the presence of glutamine and ATP through an activated phospho-Asp-tRNA(Asn) or phospho-Glu-tRNA(Gln). This is Aspartyl/glutamyl-tRNA(Asn/Gln) amidotransferase subunit C from Lactobacillus acidophilus (strain ATCC 700396 / NCK56 / N2 / NCFM).